The following is a 921-amino-acid chain: Isoleucine--tRNA ligase (921 aa).

Positions 57 to 67 (PYANGDIHMGH) match the 'HIGH' region motif. Position 552 (Glu-552) interacts with L-isoleucyl-5'-AMP. The 'KMSKS' region motif lies at 593 to 597 (KMSKS). ATP is bound at residue Lys-596. 4 residues coordinate Zn(2+): Cys-888, Cys-891, Cys-908, and Cys-911.

It belongs to the class-I aminoacyl-tRNA synthetase family. IleS type 1 subfamily. As to quaternary structure, monomer. It depends on Zn(2+) as a cofactor.

It is found in the cytoplasm. It carries out the reaction tRNA(Ile) + L-isoleucine + ATP = L-isoleucyl-tRNA(Ile) + AMP + diphosphate. Catalyzes the attachment of isoleucine to tRNA(Ile). As IleRS can inadvertently accommodate and process structurally similar amino acids such as valine, to avoid such errors it has two additional distinct tRNA(Ile)-dependent editing activities. One activity is designated as 'pretransfer' editing and involves the hydrolysis of activated Val-AMP. The other activity is designated 'posttransfer' editing and involves deacylation of mischarged Val-tRNA(Ile). This Bacillus mycoides (strain KBAB4) (Bacillus weihenstephanensis) protein is Isoleucine--tRNA ligase.